The following is a 721-amino-acid chain: Cytosolic carboxypeptidase 2 (721 aa).

The disordered stretch occupies residues 43–71 (TASDMINSSSPSESSDSNLEEEQEESKPC). Residues 50–59 (SSSPSESSDS) show a composition bias toward low complexity. Residues 334–605 (YPYTYSKLQH…CFCDTLLDFC (272 aa)) form the Peptidase M14 domain. Zn(2+) contacts are provided by His-400, Glu-403, and His-496. Residue Glu-569 is the Proton donor/acceptor of the active site. The disordered stretch occupies residues 645–721 (DIESSTSGSN…TQHGDTEDQS (77 aa)). A compositionally biased stretch (low complexity) spans 647–660 (ESSTSGSNSTESDG). Over residues 672–688 (GKKKLLRSRKERNRLRQ) the composition is skewed to basic residues. The segment covering 703-714 (YSCQTLNATTQH) has biased composition (polar residues).

This sequence belongs to the peptidase M14 family. Requires Zn(2+) as cofactor.

It localises to the cytoplasm. Its subcellular location is the cytosol. It is found in the cytoskeleton. The protein resides in the microtubule organizing center. The protein localises to the centrosome. It localises to the centriole. Its subcellular location is the cilium basal body. It catalyses the reaction (L-glutamyl)(n+1)-gamma-L-glutamyl-L-glutamyl-[protein] + H2O = (L-glutamyl)(n)-gamma-L-glutamyl-L-glutamyl-[protein] + L-glutamate. Functionally, metallocarboxypeptidase that mediates deglutamylation of target proteins. Catalyzes the deglutamylation of polyglutamate side chains generated by post-translational polyglutamylation in proteins such as tubulins. Also removes gene-encoded polyglutamates from the carboxy-terminus of target proteins such as MYLK. Does not show detyrosinase or deglycylase activities from the carboxy-terminus of tubulin. Its function is as follows. Metallocarboxypeptidase that mediates deglutamylation of tubulin and non-tubulin target proteins. Catalyzes the removal of polyglutamate side chains present on the gamma-carboxyl group of glutamate residues within the C-terminal tail of tubulin protein. Specifically cleaves tubulin long-side-chains, while it is not able to remove the branching point glutamate. Also catalyzes the removal of polyglutamate residues from the carboxy-terminus of non-tubulin proteins. In Danio rerio (Zebrafish), this protein is Cytosolic carboxypeptidase 2 (zte25).